The following is a 401-amino-acid chain: Imidazolonepropionase (401 aa).

H70 and H72 together coordinate Fe(3+). Residues H70 and H72 each coordinate Zn(2+). 4-imidazolone-5-propanoate contacts are provided by R79, Y142, and H175. Y142 contributes to the N-formimidoyl-L-glutamate binding site. Position 238 (H238) interacts with Fe(3+). Zn(2+) is bound at residue H238. Q241 contacts 4-imidazolone-5-propanoate. D313 contributes to the Fe(3+) binding site. D313 lines the Zn(2+) pocket. N315 and G317 together coordinate N-formimidoyl-L-glutamate. Position 318 (T318) interacts with 4-imidazolone-5-propanoate.

The protein belongs to the metallo-dependent hydrolases superfamily. HutI family. The cofactor is Zn(2+). Fe(3+) is required as a cofactor.

The protein localises to the cytoplasm. It carries out the reaction 4-imidazolone-5-propanoate + H2O = N-formimidoyl-L-glutamate. Its pathway is amino-acid degradation; L-histidine degradation into L-glutamate; N-formimidoyl-L-glutamate from L-histidine: step 3/3. Catalyzes the hydrolytic cleavage of the carbon-nitrogen bond in imidazolone-5-propanoate to yield N-formimidoyl-L-glutamate. It is the third step in the universal histidine degradation pathway. The chain is Imidazolonepropionase from Xanthomonas euvesicatoria pv. vesicatoria (strain 85-10) (Xanthomonas campestris pv. vesicatoria).